The primary structure comprises 150 residues: Flagellar assembly factor FliW (150 aa).

Belongs to the FliW family. Interacts with translational regulator CsrA and flagellin(s).

The protein resides in the cytoplasm. Its function is as follows. Acts as an anti-CsrA protein, binds CsrA and prevents it from repressing translation of its target genes, one of which is flagellin. Binds to flagellin and participates in the assembly of the flagellum. The sequence is that of Flagellar assembly factor FliW from Thermoanaerobacter pseudethanolicus (strain ATCC 33223 / 39E) (Clostridium thermohydrosulfuricum).